Reading from the N-terminus, the 486-residue chain is 23S rRNA (uracil(1939)-C(5))-methyltransferase RlmD (486 aa).

The region spanning 14–76 (AAQDGSGLPE…NHWEQANLTA (63 aa)) is the TRAM domain. The [4Fe-4S] cluster site is built by cysteine 89, cysteine 99, cysteine 102, and cysteine 181. 6 residues coordinate S-adenosyl-L-methionine: glutamine 289, phenylalanine 318, asparagine 323, glutamate 339, asparagine 374, and aspartate 395. Cysteine 442 functions as the Nucleophile in the catalytic mechanism.

It belongs to the class I-like SAM-binding methyltransferase superfamily. RNA M5U methyltransferase family. RlmD subfamily.

The enzyme catalyses uridine(1939) in 23S rRNA + S-adenosyl-L-methionine = 5-methyluridine(1939) in 23S rRNA + S-adenosyl-L-homocysteine + H(+). In terms of biological role, catalyzes the formation of 5-methyl-uridine at position 1939 (m5U1939) in 23S rRNA. In Verminephrobacter eiseniae (strain EF01-2), this protein is 23S rRNA (uracil(1939)-C(5))-methyltransferase RlmD.